Consider the following 221-residue polypeptide: Elongation factor Ts (221 aa).

Positions 82–85 are involved in Mg(2+) ion dislocation from EF-Tu; sequence TDFV.

The protein belongs to the EF-Ts family.

It localises to the cytoplasm. In terms of biological role, associates with the EF-Tu.GDP complex and induces the exchange of GDP to GTP. It remains bound to the aminoacyl-tRNA.EF-Tu.GTP complex up to the GTP hydrolysis stage on the ribosome. This is Elongation factor Ts from Synechococcus elongatus (strain ATCC 33912 / PCC 7942 / FACHB-805) (Anacystis nidulans R2).